Consider the following 397-residue polypeptide: S-adenosylmethionine synthase (397 aa).

H15 contributes to the ATP binding site. D17 is a Mg(2+) binding site. E43 contributes to the K(+) binding site. Residues E56 and Q99 each contribute to the L-methionine site. Positions 99–109 (QSGDIAMGVDE) are flexible loop. Residues 175–177 (DGK), 241–242 (RF), D250, 256–257 (RK), A273, and K277 contribute to the ATP site. D250 is a binding site for L-methionine. K281 serves as a coordination point for L-methionine.

The protein belongs to the AdoMet synthase family. Homotetramer; dimer of dimers. Mg(2+) serves as cofactor. K(+) is required as a cofactor.

The protein localises to the cytoplasm. It catalyses the reaction L-methionine + ATP + H2O = S-adenosyl-L-methionine + phosphate + diphosphate. The protein operates within amino-acid biosynthesis; S-adenosyl-L-methionine biosynthesis; S-adenosyl-L-methionine from L-methionine: step 1/1. Functionally, catalyzes the formation of S-adenosylmethionine (AdoMet) from methionine and ATP. The overall synthetic reaction is composed of two sequential steps, AdoMet formation and the subsequent tripolyphosphate hydrolysis which occurs prior to release of AdoMet from the enzyme. This chain is S-adenosylmethionine synthase, found in Clostridioides difficile (strain 630) (Peptoclostridium difficile).